Consider the following 241-residue polypeptide: Octanoyltransferase (241 aa).

The BPL/LPL catalytic domain occupies 49 to 233 (GEASELVWLL…AFGEVFGPSE (185 aa)). Residues 87–94 (RGGQVTYH), 162–164 (AIG), and 175–177 (GIS) contribute to the substrate site. The Acyl-thioester intermediate role is filled by C193.

It belongs to the LipB family.

The protein resides in the cytoplasm. It carries out the reaction octanoyl-[ACP] + L-lysyl-[protein] = N(6)-octanoyl-L-lysyl-[protein] + holo-[ACP] + H(+). Its pathway is protein modification; protein lipoylation via endogenous pathway; protein N(6)-(lipoyl)lysine from octanoyl-[acyl-carrier-protein]: step 1/2. In terms of biological role, catalyzes the transfer of endogenously produced octanoic acid from octanoyl-acyl-carrier-protein onto the lipoyl domains of lipoate-dependent enzymes. Lipoyl-ACP can also act as a substrate although octanoyl-ACP is likely to be the physiological substrate. This chain is Octanoyltransferase, found in Nitrobacter hamburgensis (strain DSM 10229 / NCIMB 13809 / X14).